Consider the following 341-residue polypeptide: Glycerol-3-phosphate dehydrogenase [NAD(P)+] (341 aa).

The NADPH site is built by Ser-15, Trp-16, Arg-36, and Lys-110. Sn-glycerol 3-phosphate contacts are provided by Lys-110, Gly-139, and Ser-141. Ala-143 is an NADPH binding site. The sn-glycerol 3-phosphate site is built by Lys-194, Asp-247, Ser-257, Arg-258, and Asn-259. The Proton acceptor role is filled by Lys-194. Arg-258 contacts NADPH. Val-282 and Glu-284 together coordinate NADPH.

The protein belongs to the NAD-dependent glycerol-3-phosphate dehydrogenase family.

It localises to the cytoplasm. The catalysed reaction is sn-glycerol 3-phosphate + NAD(+) = dihydroxyacetone phosphate + NADH + H(+). It catalyses the reaction sn-glycerol 3-phosphate + NADP(+) = dihydroxyacetone phosphate + NADPH + H(+). The protein operates within membrane lipid metabolism; glycerophospholipid metabolism. In terms of biological role, catalyzes the reduction of the glycolytic intermediate dihydroxyacetone phosphate (DHAP) to sn-glycerol 3-phosphate (G3P), the key precursor for phospholipid synthesis. The chain is Glycerol-3-phosphate dehydrogenase [NAD(P)+] from Stenotrophomonas maltophilia (strain K279a).